A 549-amino-acid polypeptide reads, in one-letter code: Membrane protein insertase YidC (549 aa).

A helical membrane pass occupies residues 8-28 (VLLATVLSVAVLIVWQFVFPS). Residues 29–39 (PKPKPQPPKPP) show a composition bias toward pro residues. Residues 29–68 (PKPKPQPPKPPEAAQRAEAPAAPAPGQPAAQAPAPAVPQD) form a disordered region. Low complexity-rich tracts occupy residues 40-49 (EAAQRAEAPA) and 55-68 (QPAA…VPQD). 4 consecutive transmembrane segments (helical) span residues 328–348 (IDYG…LFVM), 354–374 (LVAN…VLLY), 424–444 (LGGC…YATL), and 502–522 (PGFF…YIFV).

The protein belongs to the OXA1/ALB3/YidC family. Type 1 subfamily. As to quaternary structure, interacts with the Sec translocase complex via SecD. Specifically interacts with transmembrane segments of nascent integral membrane proteins during membrane integration.

The protein resides in the cell inner membrane. Required for the insertion and/or proper folding and/or complex formation of integral membrane proteins into the membrane. Involved in integration of membrane proteins that insert both dependently and independently of the Sec translocase complex, as well as at least some lipoproteins. Aids folding of multispanning membrane proteins. The sequence is that of Membrane protein insertase YidC from Anaeromyxobacter sp. (strain Fw109-5).